Consider the following 167-residue polypeptide: NADH-quinone oxidoreductase subunit B 2 (167 aa).

[4Fe-4S] cluster is bound by residues Cys38, Cys39, Cys104, and Cys133.

Belongs to the complex I 20 kDa subunit family. As to quaternary structure, NDH-1 is composed of 14 different subunits. Subunits NuoB, C, D, E, F, and G constitute the peripheral sector of the complex. The cofactor is [4Fe-4S] cluster.

It localises to the cell membrane. It catalyses the reaction a quinone + NADH + 5 H(+)(in) = a quinol + NAD(+) + 4 H(+)(out). Its function is as follows. NDH-1 shuttles electrons from NADH, via FMN and iron-sulfur (Fe-S) centers, to quinones in the respiratory chain. The immediate electron acceptor for the enzyme in this species is believed to be ubiquinone. Couples the redox reaction to proton translocation (for every two electrons transferred, four hydrogen ions are translocated across the cytoplasmic membrane), and thus conserves the redox energy in a proton gradient. The chain is NADH-quinone oxidoreductase subunit B 2 from Roseiflexus sp. (strain RS-1).